The primary structure comprises 327 residues: Thioredoxin reductase sirT (327 aa).

Residues 15-18 (AGPA), 37-42 (DTGVFR), His50, and Ala115 contribute to the FAD site. Cys139 and Cys142 are disulfide-bonded. Residues Asp289 and 296-297 (QV) each bind FAD.

This sequence belongs to the class-II pyridine nucleotide-disulfide oxidoreductase family. As to quaternary structure, homodimer. FAD serves as cofactor.

The protein operates within mycotoxin biosynthesis. In terms of biological role, thioredoxin reductase; part of the gene cluster that mediates the biosynthesis of sirodesmin PL, an epipolythiodioxopiperazine (ETP) characterized by a disulfide bridged cyclic dipeptide and that acts as a phytotoxin which is involved in the blackleg didease of canola. SirD catalyzes the O-prenylation of L-tyrosine (L-Tyr) in the presence of dimethylallyl diphosphate (DMAPP) to yield 4-O-dimethylallyl-L-Tyr, and therefore represents probably the first pathway-specific enzyme in the biosynthesis of sirodesmin PL. 4-O-dimethylallyl-L-Tyr, then undergoes condensation with L-Ser in a reaction catalyzed by the non-ribosomal peptide synthase sirP to form the diketopiperazine (DKP) backbone. Further bishydroxylation of the DKP performed by the cytochrome P450 monooxygenase sirC leads to the production of the intermediate phomamide. This step is essential to form the reactive thiol group required for toxicity of sirodesmin PL. The next steps of sirodesmin biosynthesis are not well understood yet, but some predictions could be made from intermediate compounds identification. Phomamide is converted into phomalizarine via oxidation, probably by sirT. Further oxidation, methylation (by sirM or sirN) and reduction steps convert phomalizarine to deacetyl sirodesmin. Finally, acetyltransferase sirH probably acetylates deacetyl sirodesmin to produce sirodesmin PL. This Leptosphaeria maculans (Blackleg fungus) protein is Thioredoxin reductase sirT.